A 307-amino-acid polypeptide reads, in one-letter code: Branched-chain-amino-acid aminotransferase (307 aa).

Lysine 160 is modified (N6-(pyridoxal phosphate)lysine).

The protein belongs to the class-IV pyridoxal-phosphate-dependent aminotransferase family. Pyridoxal 5'-phosphate serves as cofactor.

It carries out the reaction L-leucine + 2-oxoglutarate = 4-methyl-2-oxopentanoate + L-glutamate. The catalysed reaction is L-isoleucine + 2-oxoglutarate = (S)-3-methyl-2-oxopentanoate + L-glutamate. It catalyses the reaction L-valine + 2-oxoglutarate = 3-methyl-2-oxobutanoate + L-glutamate. It participates in amino-acid biosynthesis; L-isoleucine biosynthesis; L-isoleucine from 2-oxobutanoate: step 4/4. It functions in the pathway amino-acid biosynthesis; L-leucine biosynthesis; L-leucine from 3-methyl-2-oxobutanoate: step 4/4. Its pathway is amino-acid biosynthesis; L-valine biosynthesis; L-valine from pyruvate: step 4/4. In terms of biological role, acts on leucine, isoleucine and valine. The polypeptide is Branched-chain-amino-acid aminotransferase (ilvE) (Pseudomonas aeruginosa (strain ATCC 15692 / DSM 22644 / CIP 104116 / JCM 14847 / LMG 12228 / 1C / PRS 101 / PAO1)).